A 360-amino-acid polypeptide reads, in one-letter code: Protein DVR-1 (360 aa).

The signal sequence occupies residues 1–16; the sequence is MVWLRLWAFLHILAIV. A propeptide spanning residues 17 to 246 is cleaved from the precursor; sequence TLDPELKRRE…LRCKRPRRKR (230 aa). N113, N181, and N301 each carry an N-linked (GlcNAc...) asparagine glycan. 3 disulfide bridges follow: C259-C325, C288-C357, and C292-C359.

Belongs to the TGF-beta family. In terms of assembly, homodimer. In terms of tissue distribution, vegetal region of the egg.

It is found in the secreted. Its function is as follows. Serves to facilitate the differentiation of either mesoderm or endoderm either as a cofactor in an instructive signal or by providing permissive environment. This Xenopus laevis (African clawed frog) protein is Protein DVR-1 (dvr1).